Consider the following 195-residue polypeptide: U8 snoRNA-decapping enzyme (195 aa).

In terms of domain architecture, Nudix hydrolase spans 18–168 (GWRHACHAML…LENTFIGNAR (151 aa)). 3 residues coordinate substrate: His24, Arg50, and Phe57. Positions 59, 76, 80, and 99 each coordinate Mn(2+). The short motif at 61-82 (FVDLRDGSLEDGLNRELGEELG) is the Nudix box element. The substrate site is built by Asn166 and Gln170. Glu173 provides a ligand contact to Mn(2+).

Belongs to the Nudix hydrolase family. NUDT16 subfamily. In terms of assembly, homodimer. Mg(2+) serves as cofactor. It depends on Mn(2+) as a cofactor. The cofactor is Co(2+).

The protein resides in the nucleus. It is found in the nucleolus. The protein localises to the nucleoplasm. Its subcellular location is the cytoplasm. The enzyme catalyses a 5'-end (N(7)-methyl 5'-triphosphoguanosine)-ribonucleoside in mRNA + H2O = N(7)-methyl-GDP + a 5'-end phospho-ribonucleoside in mRNA + 2 H(+). It catalyses the reaction IDP + H2O = IMP + phosphate + H(+). The catalysed reaction is dIDP + H2O = dIMP + phosphate + H(+). It carries out the reaction a 5'-end NAD(+)-phospho-ribonucleoside in mRNA + H2O = a 5'-end phospho-ribonucleoside in mRNA + NAD(+) + H(+). The enzyme catalyses a 5'-end FAD-phospho-ribonucleoside in mRNA + H2O = a 5'-end phospho-adenosine-phospho-ribonucleoside in mRNA + FMN + 2 H(+). It catalyses the reaction a 5'-end CoA-ribonucleoside in mRNA + H2O = a 5'-end phospho-adenosine-phospho-ribonucleoside in mRNA + (R)-4'-phosphopantetheine + 2 H(+). Functionally, RNA-binding and decapping enzyme that catalyzes the cleavage of the cap structure of snoRNAs and mRNAs in a metal-dependent manner. Part of the U8 snoRNP complex that is required for the accumulation of mature 5.8S and 28S rRNA. Has diphosphatase activity and removes m7G and/or m227G caps from U8 snoRNA and leaves a 5'monophosphate on the RNA. Also catalyzes the cleavage of the cap structure on mRNAs. Does not hydrolyze cap analog structures like 7-methylguanosine nucleoside triphosphate (m7GpppG). Also hydrolysis m7G- and m227G U3-capped RNAs but with less efficiencies. Has broad substrate specificity with manganese or cobalt as cofactor and can act on various RNA species. Binds to the U8 snoRNA; metal is not required for RNA-binding. May play a role in the regulation of snoRNAs and mRNAs degradation. Also acts as a phosphatase; hydrolyzes the non-canonical purine nucleotides inosine diphosphate (IDP) and deoxyinosine diphosphate (dITP) as well as guanosine diphosphate (GDP), deoxyguanosine diphosphate (dGDP), xanthine diphosphate (XDP), inosine triphosphate (ITP) and deoxyinosine triphosphate (ITP) to their respective monophosphate derivatives and does not distinguish between the deoxy- and ribose forms. The order of activity with different substrates is IDP &gt; dIDP &gt;&gt; GDP = dGDP &gt; XDP = ITP = dITP. Binds strongly to GTP, ITP and XTP. Participates in the hydrolysis of dIDP/IDP and probably excludes non-canonical purines from RNA and DNA precursor pools, thus preventing their incorporation into RNA and DNA and avoiding chromosomal lesions. Exhibits decapping activity towards NAD-capped RNAs and FAD-capped RNAs. Exhibits decapping activity towards dpCoA-capped RNAs in vitro. The protein is U8 snoRNA-decapping enzyme (NUDT16) of Ovis aries (Sheep).